The chain runs to 76 residues: Protein CYSTEINE-RICH TRANSMEMBRANE MODULE 11 (76 aa).

Residues 19–45 (GPPPPVGVPPQYYPPPPPPPPPPPPPR) form a disordered region. Residues 47–63 (VGFLEGLLAALCCCCLV) traverse the membrane as a helical segment.

This sequence belongs to the CYSTM1 family. As to quaternary structure, heterodimers. Interacts with CYSTM6, CYSTM7 and WIH1/CYSTM13. As to expression, mostly expressed in stems, siliques, leaves and flowers and, to a lower extent, in roots.

The protein resides in the cell membrane. It is found in the cytoplasm. In terms of biological role, involved in resistance to abiotic stress. The sequence is that of Protein CYSTEINE-RICH TRANSMEMBRANE MODULE 11 from Arabidopsis thaliana (Mouse-ear cress).